The primary structure comprises 496 residues: Aspartyl/glutamyl-tRNA(Asn/Gln) amidotransferase subunit B (496 aa).

This sequence belongs to the GatB/GatE family. GatB subfamily. Heterotrimer of A, B and C subunits.

The enzyme catalyses L-glutamyl-tRNA(Gln) + L-glutamine + ATP + H2O = L-glutaminyl-tRNA(Gln) + L-glutamate + ADP + phosphate + H(+). It catalyses the reaction L-aspartyl-tRNA(Asn) + L-glutamine + ATP + H2O = L-asparaginyl-tRNA(Asn) + L-glutamate + ADP + phosphate + 2 H(+). Functionally, allows the formation of correctly charged Asn-tRNA(Asn) or Gln-tRNA(Gln) through the transamidation of misacylated Asp-tRNA(Asn) or Glu-tRNA(Gln) in organisms which lack either or both of asparaginyl-tRNA or glutaminyl-tRNA synthetases. The reaction takes place in the presence of glutamine and ATP through an activated phospho-Asp-tRNA(Asn) or phospho-Glu-tRNA(Gln). This chain is Aspartyl/glutamyl-tRNA(Asn/Gln) amidotransferase subunit B, found in Nitrosospira multiformis (strain ATCC 25196 / NCIMB 11849 / C 71).